The chain runs to 162 residues: Methyl-coenzyme M reductase II operon protein D (162 aa).

MCR is composed of three subunits: alpha, beta, and gamma. The function of protein D is not known.

This is Methyl-coenzyme M reductase II operon protein D (mrtD) from Methanothermobacter thermautotrophicus (strain ATCC 29096 / DSM 1053 / JCM 10044 / NBRC 100330 / Delta H) (Methanobacterium thermoautotrophicum).